The following is a 307-amino-acid chain: Taste receptor type 2 member 41 (307 aa).

The Extracellular segment spans residues 1–7 (MQAALMA). A helical membrane pass occupies residues 8–28 (FFMLLFSLLSLLGIAANGFIV). Residues 29–40 (LVLGREWLRYGR) are Cytoplasmic-facing. The chain crosses the membrane as a helical span at residues 41–61 (LLPLDMILISLGASRXCLQLV). At 62-88 (GTVHNFYYSARKVEYSGGLGRQFFHLH) the chain is on the extracellular side. A helical membrane pass occupies residues 89 to 109 (WHFLNSATFWFCSWLSVLFCV). Residues 110 to 129 (KIANITHPTFLWLKWRFPGW) are Cytoplasmic-facing. The chain crosses the membrane as a helical span at residues 130–150 (VPWLLLGSVLISFIITLLFFW). Topologically, residues 151-183 (VNYPVYQELLIRKFSGNMTYKWNTRIETYYFPS) are extracellular. N-linked (GlcNAc...) asparagine glycosylation is present at Asn-167. The helical transmembrane segment at 184–204 (LKLVIWSIPFSVFLVSIMLLI) threads the bilayer. Residues 205 to 234 (NSLRRHTQRMQHNGHSLQDPSTQAHTRALK) lie on the Cytoplasmic side of the membrane. The chain crosses the membrane as a helical span at residues 235–255 (SLISFLFLYALSFLSLIIDAT). At 256 to 264 (KFISMQNDF) the chain is on the extracellular side. The chain crosses the membrane as a helical span at residues 265–285 (YWPWQIAVYLCISVHPFILIF). The Cytoplasmic segment spans residues 286-307 (SNLKLRSMFWQVLLLARGFWVA).

The protein belongs to the G-protein coupled receptor T2R family.

The protein localises to the membrane. Receptor that may play a role in the perception of bitterness and is gustducin-linked. May play a role in sensing the chemical composition of the gastrointestinal content. The activity of this receptor may stimulate alpha gustducin, mediate PLC-beta-2 activation and lead to the gating of TRPM5. The protein is Taste receptor type 2 member 41 (TAS2R41) of Gorilla gorilla gorilla (Western lowland gorilla).